Consider the following 127-residue polypeptide: Small ribosomal subunit protein uS13 (127 aa).

The segment at Leu-96–Lys-127 is disordered. Basic residues predominate over residues Arg-108–Lys-127.

It belongs to the universal ribosomal protein uS13 family. In terms of assembly, part of the 30S ribosomal subunit. Forms a loose heterodimer with protein S19. Forms two bridges to the 50S subunit in the 70S ribosome.

Functionally, located at the top of the head of the 30S subunit, it contacts several helices of the 16S rRNA. In the 70S ribosome it contacts the 23S rRNA (bridge B1a) and protein L5 of the 50S subunit (bridge B1b), connecting the 2 subunits; these bridges are implicated in subunit movement. Contacts the tRNAs in the A and P-sites. This is Small ribosomal subunit protein uS13 from Desulfosudis oleivorans (strain DSM 6200 / JCM 39069 / Hxd3) (Desulfococcus oleovorans).